A 663-amino-acid chain; its full sequence is UvrABC system protein B (663 aa).

The Helicase ATP-binding domain maps to 26 to 414 (DGLESGLAKQ…DNVAEQVVRP (389 aa)). ATP is bound at residue 39–46 (GVTGSGKT). A Beta-hairpin motif is present at residues 92–115 (YYDYYQPEAYVPASDTFIEKDASI). One can recognise a Helicase C-terminal domain in the interval 430-596 (QVDDLMSEIR…GINKSVEDIL (167 aa)). The UVR domain occupies 624 to 659 (VKQINALEKQMYSHAQNMEFELAAKIRDEYLLLKEQ).

This sequence belongs to the UvrB family. Forms a heterotetramer with UvrA during the search for lesions. Interacts with UvrC in an incision complex.

The protein localises to the cytoplasm. Functionally, the UvrABC repair system catalyzes the recognition and processing of DNA lesions. A damage recognition complex composed of 2 UvrA and 2 UvrB subunits scans DNA for abnormalities. Upon binding of the UvrA(2)B(2) complex to a putative damaged site, the DNA wraps around one UvrB monomer. DNA wrap is dependent on ATP binding by UvrB and probably causes local melting of the DNA helix, facilitating insertion of UvrB beta-hairpin between the DNA strands. Then UvrB probes one DNA strand for the presence of a lesion. If a lesion is found the UvrA subunits dissociate and the UvrB-DNA preincision complex is formed. This complex is subsequently bound by UvrC and the second UvrB is released. If no lesion is found, the DNA wraps around the other UvrB subunit that will check the other stand for damage. This is UvrABC system protein B from Legionella pneumophila subsp. pneumophila (strain Philadelphia 1 / ATCC 33152 / DSM 7513).